A 267-amino-acid polypeptide reads, in one-letter code: PF03932 family protein CutC (267 aa).

It belongs to the CutC family.

The protein localises to the cytoplasm. The sequence is that of PF03932 family protein CutC from Xylella fastidiosa (strain 9a5c).